The chain runs to 155 residues: Ferredoxin-6, chloroplastic (155 aa).

Residues M1–A58 constitute a chloroplast transit peptide. The 2Fe-2S ferredoxin-type domain occupies H61–E152. Residues C98, C103, C106, and C136 each coordinate [2Fe-2S] cluster.

It belongs to the 2Fe2S plant-type ferredoxin family. [2Fe-2S] cluster serves as cofactor.

It localises to the plastid. Its subcellular location is the chloroplast. Ferredoxins are iron-sulfur proteins that transfer electrons in a wide variety of metabolic reactions. In Zea mays (Maize), this protein is Ferredoxin-6, chloroplastic (FDX6).